The chain runs to 308 residues: Insoluble matrix shell protein 4 (308 aa).

Disordered stretches follow at residues 1–21, 47–104, and 134–250; these read HGNG…GNGY, NTNS…PNAV, and YDSN…NTNS. Residues 47-99 show a composition bias toward low complexity; it reads NTNSLNGNNNGNSNNNGNGNNNGNSNNNGNGNNNGNTNNGNSYDSNTNDDSNS.

Component of the acid-insoluble organic matrix of the calcified shell.

The protein localises to the secreted. The protein is Insoluble matrix shell protein 4 of Ruditapes philippinarum (Japanese carpet shell).